A 349-amino-acid polypeptide reads, in one-letter code: Dihydroorotase (349 aa).

Zn(2+)-binding residues include histidine 17 and histidine 19. Substrate is bound by residues 19–21 and asparagine 45; that span reads HLR. Zn(2+)-binding residues include lysine 105, histidine 142, and histidine 180. The residue at position 105 (lysine 105) is an N6-carboxylysine. Residue histidine 142 coordinates substrate. Leucine 225 provides a ligand contact to substrate. Aspartate 253 is a binding site for Zn(2+). Aspartate 253 is an active-site residue. Substrate-binding residues include histidine 257 and alanine 269.

This sequence belongs to the metallo-dependent hydrolases superfamily. DHOase family. Class II DHOase subfamily. As to quaternary structure, homodimer. Zn(2+) serves as cofactor.

The enzyme catalyses (S)-dihydroorotate + H2O = N-carbamoyl-L-aspartate + H(+). It participates in pyrimidine metabolism; UMP biosynthesis via de novo pathway; (S)-dihydroorotate from bicarbonate: step 3/3. In terms of biological role, catalyzes the reversible cyclization of carbamoyl aspartate to dihydroorotate. The sequence is that of Dihydroorotase from Nitrosomonas europaea (strain ATCC 19718 / CIP 103999 / KCTC 2705 / NBRC 14298).